A 157-amino-acid chain; its full sequence is 6,7-dimethyl-8-ribityllumazine synthase (157 aa).

5-amino-6-(D-ribitylamino)uracil is bound by residues Phe-26, 60-62 (ALE), and 86-88 (AVI). (2S)-2-hydroxy-3-oxobutyl phosphate is bound at residue 91 to 92 (ET). His-94 acts as the Proton donor in catalysis. Asn-119 is a 5-amino-6-(D-ribitylamino)uracil binding site. Arg-133 contacts (2S)-2-hydroxy-3-oxobutyl phosphate.

The protein belongs to the DMRL synthase family.

The enzyme catalyses (2S)-2-hydroxy-3-oxobutyl phosphate + 5-amino-6-(D-ribitylamino)uracil = 6,7-dimethyl-8-(1-D-ribityl)lumazine + phosphate + 2 H2O + H(+). Its pathway is cofactor biosynthesis; riboflavin biosynthesis; riboflavin from 2-hydroxy-3-oxobutyl phosphate and 5-amino-6-(D-ribitylamino)uracil: step 1/2. Functionally, catalyzes the formation of 6,7-dimethyl-8-ribityllumazine by condensation of 5-amino-6-(D-ribitylamino)uracil with 3,4-dihydroxy-2-butanone 4-phosphate. This is the penultimate step in the biosynthesis of riboflavin. In Laribacter hongkongensis (strain HLHK9), this protein is 6,7-dimethyl-8-ribityllumazine synthase.